The chain runs to 385 residues: Guanine nucleotide-binding protein alpha-5 subunit (385 aa).

Glycine 2 carries the N-myristoyl glycine lipid modification. Cysteine 6 is lipidated: S-palmitoyl cysteine. Residues 32 to 385 (RKIKMLLLGI…NKNIETLSLE (354 aa)) enclose the G-alpha domain. The tract at residues 35 to 48 (KMLLLGISDSGKST) is G1 motif. Residues 40–47 (GISDSGKS), 174–180 (IHMRQTT), 199–203 (DVGGQ), 298–301 (NKID), and alanine 357 each bind GTP. 2 residues coordinate Mg(2+): serine 47 and threonine 180. The interval 172–180 (DLIHMRQTT) is G2 motif. Residues 195–204 (IRLIDVGGQK) form a G3 motif region. Residues 294–301 (MLFLNKID) form a G4 motif region. A G5 motif region spans residues 355–360 (TQATIT).

Belongs to the G-alpha family. As to quaternary structure, g proteins are composed of 3 units; alpha, beta and gamma. The alpha chain contains the guanine nucleotide binding site.

Its function is as follows. Guanine nucleotide-binding proteins (G proteins) are involved as modulators or transducers in various transmembrane signaling systems. The protein is Guanine nucleotide-binding protein alpha-5 subunit (gpa-5) of Caenorhabditis briggsae.